The sequence spans 140 residues: Transcriptional regulator YdaT (140 aa).

In terms of biological role, transcriptional regulator that causes a severe detrimental growth effect and reduces cell viability. When expressed, it alters expression of a variety of bacterial regulons normally controlled by the transcriptional regulatory protein RcsA, resulting in deficient lipopolysaccharide biosynthesis and cell division. YdaT has no effect on Rac prophage excision. Overexpression of ydaST reduces growth and leads to loss of cell viability. May contribute to toxicity and morphological defects. In Escherichia coli (strain K12), this protein is Transcriptional regulator YdaT (ydaT).